The sequence spans 605 residues: Adenine deaminase (605 aa).

Belongs to the metallo-dependent hydrolases superfamily. Adenine deaminase family. Mn(2+) serves as cofactor.

The catalysed reaction is adenine + H2O + H(+) = hypoxanthine + NH4(+). In Staphylothermus marinus (strain ATCC 43588 / DSM 3639 / JCM 9404 / F1), this protein is Adenine deaminase.